The primary structure comprises 147 residues: Large ribosomal subunit protein bL9 (147 aa).

The protein belongs to the bacterial ribosomal protein bL9 family.

In terms of biological role, binds to the 23S rRNA. The protein is Large ribosomal subunit protein bL9 of Geobacter sp. (strain M21).